A 311-amino-acid polypeptide reads, in one-letter code: Olfactory receptor 4K1 (311 aa).

Over 1–25 the chain is Extracellular; it reads MAHTNESMVSEFVLLGLSNSWGLQL. N5 carries an N-linked (GlcNAc...) asparagine glycan. The chain crosses the membrane as a helical span at residues 26 to 49; that stretch reads FFFAIFSIVYVTSVLGNVLIIVII. Topologically, residues 50–57 are cytoplasmic; the sequence is SFDSHLNS. The chain crosses the membrane as a helical span at residues 58–79; sequence PMYFLLSNLSFIDICQSNFATP. Over 80-100 the chain is Extracellular; sequence KMLVDFFIERKTISFEGCMAQ. An intrachain disulfide couples C97 to C189. Residues 101–120 traverse the membrane as a helical segment; it reads IFVLHSFVGSEMMLLVAMAY. The Cytoplasmic segment spans residues 121-139; sequence DRFIAICKPLHYSTIMNRR. A helical transmembrane segment spans residues 140–158; the sequence is LCVIFVSISWAVGVLHSVS. At 159–195 the chain is on the extracellular side; sequence HLAFTVDLPFCGPNEVDSFFCDLPLVIELACMDTYEM. The helical transmembrane segment at 196–219 threads the bilayer; the sequence is EIMTLTNSGLISLSCFLALIISYT. Residues 220–235 lie on the Cytoplasmic side of the membrane; the sequence is IILIGVRCRSSSGSSK. Residues 236–258 traverse the membrane as a helical segment; the sequence is ALSTLTAHITVVILFFGPCIYFY. Topologically, residues 259 to 269 are extracellular; that stretch reads IWPFSRLPVDK. The helical transmembrane segment at 270 to 289 threads the bilayer; that stretch reads FLSVFYTVCTPLLNPIIYSL. Over 290–311 the chain is Cytoplasmic; the sequence is RNEDVKAAMWKLRNRHVNSWKN.

It belongs to the G-protein coupled receptor 1 family.

It localises to the cell membrane. Its function is as follows. Odorant receptor. This is Olfactory receptor 4K1 (OR4K1) from Homo sapiens (Human).